We begin with the raw amino-acid sequence, 613 residues long: Portal protein (613 aa).

Positions 577 to 613 (ATGGDHGIRQAPSARGDAEPDHAKSKPARDPPPGAGS) are disordered. The segment covering 592–605 (GDAEPDHAKSKPAR) has biased composition (basic and acidic residues).

The protein belongs to the herpesviridae portal protein family. As to quaternary structure, homododecamerizes. Interacts with terminase subunits TRM1 and TRM3.

The protein localises to the virion. It is found in the host nucleus. Its function is as follows. Forms a portal in the viral capsid through which viral DNA is translocated during DNA packaging. Assembles as a dodecamer at a single fivefold axe of the T=16 icosahedric capsid. Binds to the molecular motor that translocates the viral DNA, termed terminase. This Homo sapiens (Human) protein is Portal protein.